A 300-amino-acid polypeptide reads, in one-letter code: SNAP25 homologous protein SNAP33 (300 aa).

2 disordered regions span residues 1 to 76 (MFGL…QSLF) and 176 to 228 (WKPK…PESA). Serine 29 carries the phosphoserine modification. The segment covering 38–49 (TLNPSKRTTSEP) has biased composition (polar residues). The span at 190 to 208 (TRDDSPTRRVNHLEKREKL) shows a compositional bias: basic and acidic residues. The t-SNARE coiled-coil homology domain occupies 235–297 (EMEKAKQDDG…QQSNQRGRRL (63 aa)).

The protein belongs to the SNAP-25 family. Interacts with the cytokinesis-specific syntaxin KNOLLE and with SYP121. Binds to EXO70B2. Ubiquitous, with a strong expression in root tips, ovules, very young leaves, vascular tissue, hydathodes, stipules and the abscission and dehiscence zones of the siliques.

Its subcellular location is the membrane. T-SNARE involved in diverse vesicle trafficking and membrane fusion processes, including cell plate formation. May function in the secretory pathway. This chain is SNAP25 homologous protein SNAP33, found in Arabidopsis thaliana (Mouse-ear cress).